The following is a 1033-amino-acid chain: MAYAHLFTFSNFTFLRGASHPAEMVEQAYRLGYDAIALTDECSLAGAVKAHVMAEECGIKLIVGSYFKLSNNCELIALAPDRAAYAELSGFITLARRRADKGEYTAHMDDLRFRLQTCLIIWLPTANTATEDNARIFSAAFKQRLWLGVGHQLAGGEQRLFQQWQNLAATYQLPMVASHLALMHSAERKPLQDVLTAINHNTSVSQLGTRLQSNGENYLKAIDEVFYLYPPGLIKQTLLIAERCNFSLNELKYQYPQELVPKGLSPIAHLRALVDSGKARRWPGGVPAQAEAILAKELALIEELHYEYYFLTVYDIVAFARQQNILCQGRGSAANSVVCYCLFITEIAPGQINVLFERFISKERDEPPDIDVDFEHQRREDVIQYIYTKYSRQRAALAATVISYRSRSAIRDVGKALGLDPALVDHLAKSLAWWDRTGDLVKRIEAAGVQTERQLVQQFFALVQQIIGFPRHLSQHVGGFVITQDKVSDLVPVENASMPGRTVIQWDKEDLEAMGLLKVDILALGMLTALRKTLAMVNRYEPAIASLADIPPEDPHTYDMLCAADTVGVFQIESRAQMSMLPRLRPRTFYDLVIEIAIVRPGPIQGDMVHPYLRRRDGLEPVSYQSPDIADVLKPTLGVPIFQEQAIRLAMVAAGFSGGEADRLRRAMASWGKNGNLLQFEETFIQGMLNNGYELDFAHRLFEQIKGFGGYGFPESHSASFAILCYASSWLKCHHPAAFYCALLNSQPMGFYSPSQLIQDARRHGIPVLPVDVNHSEAESALEPANSYRTPWAIRLGFTRIKGLDSEAAQRIADNRAQQPYRDIQQLARRSGLSRADLQKLAAADALHSLAGNRHLAHWQAASVEAQAGLFDDEPPPGDALLTAPPSLEKDLTSDYNTTGLSLRVHPMGILRQEYPFSRCKQQRQLSGLSHGRFVQVAGLVTGRQRPGTAKGTLFLTLEDETGNINVVVWKSTQERYRKALLTSKLLIVKGHLERSTPTATTDATPVIHVVAGQLLDYSDRLESLALRSRDFH.

This sequence belongs to the DNA polymerase type-C family. DnaE2 subfamily.

It localises to the cytoplasm. It carries out the reaction DNA(n) + a 2'-deoxyribonucleoside 5'-triphosphate = DNA(n+1) + diphosphate. Functionally, DNA polymerase involved in damage-induced mutagenesis and translesion synthesis (TLS). It is not the major replicative DNA polymerase. This chain is Error-prone DNA polymerase, found in Teredinibacter turnerae (strain ATCC 39867 / T7901).